Reading from the N-terminus, the 580-residue chain is uncharacterized protein (580 aa).

Disordered regions lie at residues 161 to 241 (SFSP…SVND), 256 to 281 (LGSL…SFSD), 325 to 345 (NVSH…QLLK), 472 to 495 (PRDT…DNSD), and 544 to 564 (SAVL…KEVR). Low complexity predominate over residues 192-203 (SNSNSSDTSTDD). 2 stretches are compositionally biased toward polar residues: residues 223 to 241 (THSS…SVND) and 256 to 269 (LGSL…TAQK). Residues 326-341 (VSHEEKSHSVQDDKSK) show a composition bias toward basic and acidic residues. Residues 481 to 495 (PNLSQSGNINSDNSD) show a composition bias toward polar residues.

This is an uncharacterized protein from Schizosaccharomyces pombe (strain 972 / ATCC 24843) (Fission yeast).